A 405-amino-acid chain; its full sequence is MNLALSLLHKRGFLKQCTSLKVLSDLMDREKIVFYAGVDATSSSLHIGHLIPFLAMMHLRQHGHMPIVLIGDSTAKIGDPSGKSEMRKILSSEEIGNNALLIKNQLQRITKFTSECFIHNSNWLDNLNYIEFLRDVGMHFSVNRMLSFETYKRRMDFGLSFIEFNYQLLQSYDYYMLNKIKNCRLQIGGDDQWGNIISGVDLIRKKNGSETFGLTFPLITRSDGKKMGKSEKGAVYLDSNLFSIYDFYQYFRNTSDSDVKTFLYLFTFLEEDEIELISNFKGNSLNKAKEILAFEITKIVHGEAEALKVQEASFAAFRGSGDRSNIPFFKFSFSSLKEEILLVDLMLDSKIVPSKSEGRRLIDSGGVYINGKRVESQSHLLTKKDFNNNEVELRVGKKKFLRIVI.

L-tyrosine is bound at residue tyrosine 35. The short motif at alanine 40–histidine 49 is the 'HIGH' region element. L-tyrosine is bound by residues tyrosine 166 and glutamine 170. Residues lysine 226 to serine 230 carry the 'KMSKS' region motif. Residue lysine 229 participates in ATP binding. The S4 RNA-binding domain maps to isoleucine 340 to isoleucine 405.

It belongs to the class-I aminoacyl-tRNA synthetase family. TyrS type 1 subfamily. Homodimer.

The protein localises to the cytoplasm. The enzyme catalyses tRNA(Tyr) + L-tyrosine + ATP = L-tyrosyl-tRNA(Tyr) + AMP + diphosphate + H(+). In terms of biological role, catalyzes the attachment of tyrosine to tRNA(Tyr) in a two-step reaction: tyrosine is first activated by ATP to form Tyr-AMP and then transferred to the acceptor end of tRNA(Tyr). This Borreliella burgdorferi (strain ATCC 35210 / DSM 4680 / CIP 102532 / B31) (Borrelia burgdorferi) protein is Tyrosine--tRNA ligase.